The sequence spans 310 residues: Tagatose-6-phosphate kinase (310 aa).

The protein belongs to the carbohydrate kinase PfkB family. LacC subfamily.

The catalysed reaction is D-tagatofuranose 6-phosphate + ATP = D-tagatofuranose 1,6-bisphosphate + ADP + H(+). It participates in carbohydrate metabolism; D-tagatose 6-phosphate degradation; D-glyceraldehyde 3-phosphate and glycerone phosphate from D-tagatose 6-phosphate: step 1/2. This is Tagatose-6-phosphate kinase from Staphylococcus epidermidis (strain ATCC 35984 / DSM 28319 / BCRC 17069 / CCUG 31568 / BM 3577 / RP62A).